The primary structure comprises 462 residues: A-type ATP synthase subunit B (462 aa).

It belongs to the ATPase alpha/beta chains family. As to quaternary structure, has multiple subunits with at least A(3), B(3), C, D, E, F, H, I and proteolipid K(x).

The protein resides in the cell membrane. Its function is as follows. Component of the A-type ATP synthase that produces ATP from ADP in the presence of a proton gradient across the membrane. The B chain is a regulatory subunit. The sequence is that of A-type ATP synthase subunit B from Methanococcus maripaludis (strain C5 / ATCC BAA-1333).